Consider the following 65-residue polypeptide: Large ribosomal subunit protein bL35 (65 aa).

The segment covering 1 to 16 (MVPKQKTHSGAKKRFK) has biased composition (basic residues). Residues 1 to 39 (MVPKQKTHSGAKKRFKLTGSGSVSRARAGMRHNFEHRSS) are disordered.

Belongs to the bacterial ribosomal protein bL35 family.

The sequence is that of Large ribosomal subunit protein bL35 from Tropheryma whipplei (strain TW08/27) (Whipple's bacillus).